The chain runs to 380 residues: Alanine racemase (380 aa).

The Proton acceptor; specific for D-alanine role is filled by Lys34. Lys34 is modified (N6-(pyridoxal phosphate)lysine). Arg135 lines the substrate pocket. Tyr267 functions as the Proton acceptor; specific for L-alanine in the catalytic mechanism. Substrate is bound at residue Met315.

Belongs to the alanine racemase family. The cofactor is pyridoxal 5'-phosphate.

It carries out the reaction L-alanine = D-alanine. It participates in amino-acid biosynthesis; D-alanine biosynthesis; D-alanine from L-alanine: step 1/1. Catalyzes the interconversion of L-alanine and D-alanine. May also act on other amino acids. The polypeptide is Alanine racemase (alr) (Lawsonia intracellularis (strain PHE/MN1-00)).